Consider the following 277-residue polypeptide: Indole-3-glycerol phosphate synthase (277 aa).

Belongs to the TrpC family.

It carries out the reaction 1-(2-carboxyphenylamino)-1-deoxy-D-ribulose 5-phosphate + H(+) = (1S,2R)-1-C-(indol-3-yl)glycerol 3-phosphate + CO2 + H2O. The protein operates within amino-acid biosynthesis; L-tryptophan biosynthesis; L-tryptophan from chorismate: step 4/5. In Pseudomonas putida (strain ATCC 700007 / DSM 6899 / JCM 31910 / BCRC 17059 / LMG 24140 / F1), this protein is Indole-3-glycerol phosphate synthase.